Consider the following 462-residue polypeptide: Sensor histidine kinase RegB (462 aa).

Over 1–25 the chain is Cytoplasmic; that stretch reads MILGPDGILNRDTRGDWVRLRTLIL. A helical membrane pass occupies residues 26-45; the sequence is LRWMAVAGQLAAIVVTDWYL. At 46 to 51 the chain is on the extracellular side; it reads GVRLPM. The helical transmembrane segment at 52-70 threads the bilayer; the sequence is GLCFMAVGASVIANVIATF. At 71-78 the chain is on the cytoplasmic side; that stretch reads VFPQNRRL. Residues 79 to 96 traverse the membrane as a helical segment; sequence TEFQALMILLFDLTQLSF. Topologically, residues 97–103 are extracellular; sequence LLFLTGG. Residues 104-123 form a helical membrane-spanning segment; that stretch reads LTNPFALLILAPVTISALAL. Residues 124–129 lie on the Cytoplasmic side of the membrane; sequence ELRTTV. Residues 130-149 traverse the membrane as a helical segment; sequence ILGAIAIGLLTFTAYFHLPL. Topologically, residues 150–164 are extracellular; it reads ILADGSSLSVPRMFE. A helical transmembrane segment spans residues 165 to 182; sequence FGFWLAIVIGILFLGLYS. The Cytoplasmic portion of the chain corresponds to 183–462; it reads RRVAIEIRSM…PLGENVLIQT (280 aa). The region spanning 218–445 is the Histidine kinase domain; the sequence is AAAHELGTPL…IVEVIWPVDR (228 aa). A Phosphohistidine; by autocatalysis modification is found at histidine 221.

Its subcellular location is the cell inner membrane. It carries out the reaction ATP + protein L-histidine = ADP + protein N-phospho-L-histidine.. Its function is as follows. Member of the two-component regulatory system RegB/RegA. Involved in the positive regulation of photosynthesis gene expression in response to anaerobiosis. Also involved in positive regulation of the cbbI and cbbII Calvin cycle CO2 fixation operons, as well as in regulation of expression of genes involved in alternative CO2 fixation pathways. Phosphorylates RegA/PrrA. This Cereibacter sphaeroides (strain ATCC 17023 / DSM 158 / JCM 6121 / CCUG 31486 / LMG 2827 / NBRC 12203 / NCIMB 8253 / ATH 2.4.1.) (Rhodobacter sphaeroides) protein is Sensor histidine kinase RegB (regB).